A 243-amino-acid chain; its full sequence is MVKVKLINYTPKPLETVTWAALISYWDGWSTEAFEKISPNDVEIHLPRILSYGHESILEHATFTFSIEGCSRVCTHQLVRHRIASYTQQSQRYIKINPEDVEETFVIPESIKKDSELLKEWKELLKRSLELYEKSIERGIHQEDARFILPQSVKTKIVVTMNLRELKHFFGLRLCERAQWEIREVAWKMLEEIAKRKELKPIIEWAKLGPRCIQLGYCPERELMPPGCLKRTRERWKNLLEKY.

The ThyX domain occupies 2–207 (VKVKLINYTP…ELKPIIEWAK (206 aa)). FAD-binding positions include serine 56, 80-82 (RHR), and glutamine 88. DUMP-binding positions include 77-80 (QLVR), 88-92 (QQSQR), and arginine 146. Positions 80–90 (RHRIASYTQQS) match the ThyX motif motif. Residues 162 to 164 (NLR) and histidine 168 each bind FAD. Position 173 (arginine 173) interacts with dUMP. Arginine 173 acts as the Involved in ionization of N3 of dUMP, leading to its activation in catalysis.

Belongs to the thymidylate synthase ThyX family. As to quaternary structure, homotetramer. It depends on FAD as a cofactor.

The catalysed reaction is dUMP + (6R)-5,10-methylene-5,6,7,8-tetrahydrofolate + NADPH + H(+) = dTMP + (6S)-5,6,7,8-tetrahydrofolate + NADP(+). It functions in the pathway pyrimidine metabolism; dTTP biosynthesis. In terms of biological role, catalyzes the reductive methylation of 2'-deoxyuridine-5'-monophosphate (dUMP) to 2'-deoxythymidine-5'-monophosphate (dTMP) while utilizing 5,10-methylenetetrahydrofolate (mTHF) as the methyl donor, and NADPH and FADH(2) as the reductant. The polypeptide is Flavin-dependent thymidylate synthase (Pyrococcus horikoshii (strain ATCC 700860 / DSM 12428 / JCM 9974 / NBRC 100139 / OT-3)).